We begin with the raw amino-acid sequence, 287 residues long: MKRVMLFLATNLAVVLVLSVVLNIVYAVTGMQPGSLSGLLVMAAVFGFGGSFISLMMSKKMALRSVGGMVIESPRNETEHWLMETVSRQSQQVGIGMPTVAIYDSPDINAFATGAKRNDSLVAVSTGLLHNMTRDEAEAVLAHEVSHIANGDMVTMTLMQGVVNTFVIFLSRFIANIVASNDNEEEGGSNMMVYFGVSMVLELVFGFLASFITMWYSRHREFHADADAAHLVGKEKMIAALERLKVSHEPQLEGSMMAFGINGKKSLTELLMSHPPLDKRIASLRNM.

Helical transmembrane passes span 4–24 (VMLF…VLNI) and 36–56 (LSGL…ISLM). His-143 contributes to the Zn(2+) binding site. Residue Glu-144 is part of the active site. Residue His-147 coordinates Zn(2+). Transmembrane regions (helical) follow at residues 158–178 (LMQG…ANIV) and 192–212 (MVYF…ASFI). Residue Glu-221 participates in Zn(2+) binding.

This sequence belongs to the peptidase M48B family. It depends on Zn(2+) as a cofactor.

Its subcellular location is the cell inner membrane. The sequence is that of Protease HtpX from Vibrio atlanticus (strain LGP32) (Vibrio splendidus (strain Mel32)).